The primary structure comprises 217 residues: Ras-related protein Rab-19 (217 aa).

GTP is bound by residues Ser26, Val28, Gly29, Lys30, Thr31, Cys32, Tyr42, Ser43, Glu44, Ser45, and Thr49. Thr31 provides a ligand contact to Mg(2+). A Switch 1 motif is present at residues 39–54; sequence SGVYSESQQNTIGVDF. Mg(2+) contacts are provided by Thr49 and Asp72. A Switch 2 motif is present at residues 74 to 89; the sequence is AGQERFRTITQSYYRS. GTP-binding residues include Gly75, Asn130, Lys131, Asp133, Ser161, Ala162, and Lys163. 2 S-geranylgeranyl cysteine lipidation sites follow: Cys215 and Cys217. A Cysteine methyl ester modification is found at Cys217.

Belongs to the small GTPase superfamily. Rab family. Requires Mg(2+) as cofactor. In terms of tissue distribution, expressed in a tissue-specific manner. Detected at high levels in intestine, lung and spleen, and at a lower level in kidney.

It localises to the cell membrane. It carries out the reaction GTP + H2O = GDP + phosphate + H(+). With respect to regulation, regulated by guanine nucleotide exchange factors (GEFs) which promote the exchange of bound GDP for free GTP. Regulated by GTPase activating proteins (GAPs) which increase the GTP hydrolysis activity. Inhibited by GDP dissociation inhibitors (GDIs). In terms of biological role, the small GTPases Rab are key regulators of intracellular membrane trafficking, from the formation of transport vesicles to their fusion with membranes. Rabs cycle between an inactive GDP-bound form and an active GTP-bound form that is able to recruit to membranes different set of downstream effectors directly responsible for vesicle formation, movement, tethering and fusion. The protein is Ras-related protein Rab-19 of Mus musculus (Mouse).